The primary structure comprises 360 residues: Heat-inducible transcription repressor HrcA (360 aa).

Belongs to the HrcA family.

Its function is as follows. Negative regulator of class I heat shock genes (grpE-dnaK-dnaJ and groELS operons). Prevents heat-shock induction of these operons. This chain is Heat-inducible transcription repressor HrcA, found in Gloeobacter violaceus (strain ATCC 29082 / PCC 7421).